The primary structure comprises 444 residues: Elongation factor 1-alpha (444 aa).

Residues 15-236 enclose the tr-type G domain; it reads KPHLNLAVIG…ALDTFQPPPR (222 aa). The G1 stretch occupies residues 24 to 31; the sequence is GHVDNGKS. A GTP-binding site is contributed by 24-31; that stretch reads GHVDNGKS. Ser31 is a binding site for Mg(2+). The tract at residues 80–84 is G2; the sequence is GVTIE. Residues 101-104 form a G3 region; it reads DLPG. Residues 101-105 and 163-166 each bind GTP; these read DLPGH and NKMD. Positions 163 to 166 are G4; sequence NKMD. The interval 202 to 204 is G5; sequence SAI.

The protein belongs to the TRAFAC class translation factor GTPase superfamily. Classic translation factor GTPase family. EF-Tu/EF-1A subfamily.

The protein resides in the cytoplasm. It carries out the reaction GTP + H2O = GDP + phosphate + H(+). In terms of biological role, GTP hydrolase that promotes the GTP-dependent binding of aminoacyl-tRNA to the A-site of ribosomes during protein biosynthesis. The chain is Elongation factor 1-alpha from Pyrobaculum islandicum (strain DSM 4184 / JCM 9189 / GEO3).